A 63-amino-acid chain; its full sequence is uncharacterized protein (63 aa).

The helical transmembrane segment at 20 to 40 threads the bilayer; sequence IVLLISFIFFFGRFIYSSVGA.

It localises to the membrane. This is an uncharacterized protein from Escherichia coli O157:H7.